Reading from the N-terminus, the 357-residue chain is Cinnamyl alcohol dehydrogenase 5 (357 aa).

Cys-47 contacts Zn(2+). Position 49 (Thr-49) interacts with NADP(+). Positions 69, 70, 100, 103, 106, 114, and 163 each coordinate Zn(2+). Residues Thr-167, 188–193 (GLGGVG), 211–216 (SSSNKK), Thr-251, Gly-275, and 298–300 (SFI) each bind NADP(+).

It belongs to the zinc-containing alcohol dehydrogenase family. In terms of assembly, homodimer. The cofactor is Zn(2+). As to expression, expressed at the lateral root initiation sites, in the vascular tissues of the primary lateral root and the root caps. Expressed in the hypocotyl, cotyledon and leaf veins, apical meristem region, at the base of the trichomes, hydathodes and cauline leaves. In stems, expressed in the cells associated with the vascular cambium, interfascicular cambium and the developing xylem. Expressed in the vascular strand of petals and sepals, anthers, stamen filaments, stigma in flowers, and abscission, style and stigmatic regions of siliques.

The catalysed reaction is (E)-cinnamyl alcohol + NADP(+) = (E)-cinnamaldehyde + NADPH + H(+). It catalyses the reaction (E)-coniferol + NADP(+) = (E)-coniferaldehyde + NADPH + H(+). The enzyme catalyses (E)-sinapyl alcohol + NADP(+) = (E)-sinapaldehyde + NADPH + H(+). It carries out the reaction (E)-4-coumaroyl alcohol + NADP(+) = (E)-4-coumaraldehyde + NADPH + H(+). The catalysed reaction is (E)-caffeyl alcohol + NADP(+) = (E)-caffeyl aldehyde + NADPH + H(+). Its pathway is aromatic compound metabolism; phenylpropanoid biosynthesis. In terms of biological role, involved in lignin biosynthesis in the floral stem. Catalyzes the final step specific for the production of lignin monomers. Catalyzes the NADPH-dependent reduction of coniferaldehyde, 5-hydroxyconiferaldehyde, sinapaldehyde, 4-coumaraldehyde and caffeyl aldehyde to their respective alcohols. The polypeptide is Cinnamyl alcohol dehydrogenase 5 (Arabidopsis thaliana (Mouse-ear cress)).